Here is an 860-residue protein sequence, read N- to C-terminus: Leucine--tRNA ligase (860 aa).

Positions 42-52 (PYPSGRLHMGH) match the 'HIGH' region motif. Residues 619–623 (KMSKS) carry the 'KMSKS' region motif. Residue lysine 622 coordinates ATP.

It belongs to the class-I aminoacyl-tRNA synthetase family.

It localises to the cytoplasm. It catalyses the reaction tRNA(Leu) + L-leucine + ATP = L-leucyl-tRNA(Leu) + AMP + diphosphate. The chain is Leucine--tRNA ligase from Escherichia coli O127:H6 (strain E2348/69 / EPEC).